The chain runs to 255 residues: tRNA (guanine-N(7)-)-methyltransferase (255 aa).

Residues 1 to 11 (MSISDNSRDQL) are compositionally biased toward basic and acidic residues. The interval 1 to 25 (MSISDNSRDQLGELPAGRPLQSDFD) is disordered. Residues Glu-83, Glu-108, Asp-135, and Asp-158 each contribute to the S-adenosyl-L-methionine site. Asp-158 is a catalytic residue. Residue Lys-162 coordinates substrate. The segment at 164-169 (RHNKRR) is interaction with RNA. Residues Asp-194 and 232-235 (TKFE) each bind substrate.

Belongs to the class I-like SAM-binding methyltransferase superfamily. TrmB family.

The enzyme catalyses guanosine(46) in tRNA + S-adenosyl-L-methionine = N(7)-methylguanosine(46) in tRNA + S-adenosyl-L-homocysteine. Its pathway is tRNA modification; N(7)-methylguanine-tRNA biosynthesis. Its function is as follows. Catalyzes the formation of N(7)-methylguanine at position 46 (m7G46) in tRNA. This Corynebacterium glutamicum (strain ATCC 13032 / DSM 20300 / JCM 1318 / BCRC 11384 / CCUG 27702 / LMG 3730 / NBRC 12168 / NCIMB 10025 / NRRL B-2784 / 534) protein is tRNA (guanine-N(7)-)-methyltransferase.